A 229-amino-acid chain; its full sequence is MKINNVLTAKFIKRPNRFVAYVYLNNEEVKVHVPNTGRCREILIPDTTVVLREGTNPNRKTKYDLIAAYKNDKLINIDSQVPNAVVEEALKNKKIQPLVKFNNIKREQTFGNSRFDFKLWDDSNNKYYLEVKGVTLEDKGNCMFPDAPTERGTKHILELIEIKESHMGAGILFLVQLSGAKTFSPHKEMDKKFSEALTLAHKKGVDIFCYDCNVGEDYIEIKDPVEIIL.

It belongs to the SfsA family.

This is Sugar fermentation stimulation protein homolog from Clostridium novyi (strain NT).